Consider the following 110-residue polypeptide: UPF0122 protein SaurJH9_1295 (110 aa).

It belongs to the UPF0122 family.

In terms of biological role, might take part in the signal recognition particle (SRP) pathway. This is inferred from the conservation of its genetic proximity to ftsY/ffh. May be a regulatory protein. The chain is UPF0122 protein SaurJH9_1295 from Staphylococcus aureus (strain JH9).